The following is a 363-amino-acid chain: Cytochrome P450 CYP82D47 (363 aa).

Cys-342 is a heme binding site.

Belongs to the cytochrome P450 family. The cofactor is heme.

Functionally, probable heme-thiolate monooxygenase. The chain is Cytochrome P450 CYP82D47 from Panax ginseng (Korean ginseng).